We begin with the raw amino-acid sequence, 454 residues long: MFLAQRSLCSLSGRAKFLKTISSSKILGFSTSAKMSLKFTNAKRIEGLDSNVWIEFTKLAADPSVVNLGQGFPDISPPTYVKEELSKIAAIDSLNQYTRGFGHPSLVKALSYLYEKLYQKQIDSNKEILVTVGAYGSLFNTIQALIDEGDEVILIVPFYDCYEPMVRMAGATPVFIPLRSKPVYGKRWSSSDWTLDPQELESKFNSKTKAIILNTPHNPLGKVYNREELQVIADLCIKYDTLCISDEVYEWLVYSGNKHLKIATFPGMWERTITIGSAGKTFSVTGWKLGWSIGPNHLIKHLQTVQQNTIYTCATPLQEALAQAFWIDIKRMDDPECYFNSLPKELEVKRDRMVRLLESVGLKPIVPDGGYFIIADVSLLDPDLSDMKNNEPYDYKFVKWMTKHKKLSAIPVSAFCNSETKSQFEKFVRFCFIKKDSTLDAAEEIIKAWSVQKS.

F2 is modified (N-acetylserine). Residue G71 coordinates substrate. N6-acetyllysine; alternate is present on K116. K116 carries the post-translational modification N6-succinyllysine; alternate. Position 218 (N218) interacts with substrate. K280 is subject to N6-(pyridoxal phosphate)lysine. Residue R429 coordinates substrate.

Belongs to the class-I pyridoxal-phosphate-dependent aminotransferase family. Homodimer. The cofactor is pyridoxal 5'-phosphate.

The catalysed reaction is L-kynurenine + 2-oxoglutarate = kynurenate + L-glutamate + H2O. It catalyses the reaction L-kynurenine + glyoxylate = kynurenate + glycine + H2O. The enzyme catalyses 3-hydroxy-L-kynurenine + glyoxylate = xanthurenate + glycine + H2O. It carries out the reaction an S-substituted L-cysteine + H2O = a thiol + pyruvate + NH4(+). The protein operates within amino-acid degradation; L-kynurenine degradation; kynurenate from L-kynurenine: step 1/2. In terms of biological role, catalyzes the irreversible transamination of the L-tryptophan metabolite L-kynurenine to form kynurenic acid (KA), an intermediate in the tryptophan catabolic pathway which is also a broad spectrum antagonist of the three ionotropic excitatory amino acid receptors among others. May catalyze the beta-elimination of S-conjugates and Se-conjugates of L-(seleno)cysteine, resulting in the cleavage of the C-S or C-Se bond. Has transaminase activity towards L-kynurenine, tryptophan, phenylalanine, serine, cysteine, methionine, histidine, glutamine and asparagine with glyoxylate as an amino group acceptor (in vitro). Has lower activity with 2-oxoglutarate as amino group acceptor (in vitro). The protein is Kynurenine--oxoglutarate transaminase 3 of Homo sapiens (Human).